Here is a 176-residue protein sequence, read N- to C-terminus: Inner membrane-spanning protein YciB (176 aa).

Helical transmembrane passes span 3–23 (FLFD…WGIF), 49–69 (TMLW…LVLH), 72–92 (KFIQ…LVAA), 118–138 (KLNL…LYVV), and 149–169 (FKLF…SLWL).

This sequence belongs to the YciB family.

Its subcellular location is the cell inner membrane. Its function is as follows. Plays a role in cell envelope biogenesis, maintenance of cell envelope integrity and membrane homeostasis. This is Inner membrane-spanning protein YciB from Burkholderia mallei (strain NCTC 10247).